The primary structure comprises 274 residues: MAIHLYKTSTPSTRNRAVDSQVKSNPRNNLIYGQHRCGKGRNARGIITARHRGGGHKRLYRKIDFRRNEKDIYGRIVTIEYDPNRNAYICLIHYGDGEKRYILHPRGAIIGDTIVSGTEVPIKMGNALPLTDMPLGTAIHNIEITLGKGGQLARAAGAVAKLIAKEGKSATLKLPSGEVRLISKNCSATVGQVGNVGVNQKSLGRAGSKCWLGKRPVVRGVVMNPVDHPHGGGEGRAPIGRKKPATPWGYPALGRRSRKRNKYSDNLILRRRSK.

The disordered stretch occupies residues 224-274 (NPVDHPHGGGEGRAPIGRKKPATPWGYPALGRRSRKRNKYSDNLILRRRSK).

The protein belongs to the universal ribosomal protein uL2 family. In terms of assembly, part of the 50S ribosomal subunit.

It localises to the plastid. The protein resides in the chloroplast. The chain is Large ribosomal subunit protein uL2cz/uL2cy (rpl2-A) from Carica papaya (Papaya).